The primary structure comprises 130 residues: Small ribosomal subunit protein uS9 (130 aa).

The protein belongs to the universal ribosomal protein uS9 family.

This chain is Small ribosomal subunit protein uS9, found in Acidovorax ebreus (strain TPSY) (Diaphorobacter sp. (strain TPSY)).